A 240-amino-acid chain; its full sequence is uncharacterized protein (240 aa).

Residues 2 to 223 (VRIQDLSLAF…GNAPRELHQA (222 aa)) form the ABC transporter domain. ATP is bound at residue 34 to 41 (GSSGVGKS).

The protein belongs to the ABC transporter superfamily.

This is an uncharacterized protein from Haemophilus influenzae (strain ATCC 51907 / DSM 11121 / KW20 / Rd).